We begin with the raw amino-acid sequence, 419 residues long: Maltoporin 2 (419 aa).

The N-terminal stretch at Met1–Ala23 is a signal peptide.

The protein belongs to the porin LamB (TC 1.B.3) family. In terms of assembly, homotrimer formed of three 18-stranded antiparallel beta-barrels, containing three independent channels.

The protein resides in the cell outer membrane. It carries out the reaction beta-maltose(in) = beta-maltose(out). Functionally, involved in the transport of maltose and maltodextrins. This chain is Maltoporin 2, found in Yersinia pseudotuberculosis serotype O:1b (strain IP 31758).